Here is a 98-residue protein sequence, read N- to C-terminus: MKIPILPIVALLSLLALHAAQGAALGTPMEDTTSSNYPSGTEGLSEFLNFNKLQSAFKSDDFLNWHVLTDMFKKALPFINWEFFPKVKGLRSAVPDSQ.

The N-terminal stretch at 1 to 22 is a signal peptide; the sequence is MKIPILPIVALLSLLALHAAQG.

Ubiquitously expressed in stratified epithelium.

It is found in the secreted. In terms of biological role, may act as a soluble regulator of keratinocyte differentiation. May play an important role in embryonic skin morphogenesis. The sequence is that of Keratinocyte differentiation-associated protein from Rattus norvegicus (Rat).